We begin with the raw amino-acid sequence, 909 residues long: Protein translocase subunit SecA (909 aa).

ATP-binding positions include Gln87, 105–109, and Asp513; that span reads GEGKT. The disordered stretch occupies residues 834–909; it reads QEEVERMEEQ…KYKQCHGKID (76 aa). Basic and acidic residues predominate over residues 836 to 853; sequence EVERMEEQRRAQAEEAAR. Positions 854-863 are enriched in low complexity; it reads RAQAQHAAAQ. Residues 874–889 are compositionally biased toward basic and acidic residues; it reads EGAHQPMVREERKVGR. The Zn(2+) site is built by Cys893, Cys895, Cys904, and His905. The span at 899–909 shows a compositional bias: basic residues; the sequence is KKYKQCHGKID.

The protein belongs to the SecA family. Monomer and homodimer. Part of the essential Sec protein translocation apparatus which comprises SecA, SecYEG and auxiliary proteins SecDF-YajC and YidC. It depends on Zn(2+) as a cofactor.

The protein localises to the cell inner membrane. Its subcellular location is the cytoplasm. The enzyme catalyses ATP + H2O + cellular proteinSide 1 = ADP + phosphate + cellular proteinSide 2.. Its function is as follows. Part of the Sec protein translocase complex. Interacts with the SecYEG preprotein conducting channel. Has a central role in coupling the hydrolysis of ATP to the transfer of proteins into and across the cell membrane, serving both as a receptor for the preprotein-SecB complex and as an ATP-driven molecular motor driving the stepwise translocation of polypeptide chains across the membrane. The protein is Protein translocase subunit SecA of Vibrio campbellii (strain ATCC BAA-1116).